Consider the following 272-residue polypeptide: Formamidopyrimidine-DNA glycosylase (272 aa).

The active-site Schiff-base intermediate with DNA is the Pro2. Glu3 (proton donor) is an active-site residue. Lys58 acts as the Proton donor; for beta-elimination activity in catalysis. Residues His91, Arg111, and Arg153 each coordinate DNA. The segment at 238–272 adopts an FPG-type zinc-finger fold; the sequence is AVYGRANKACVICSKPLKEIRQAQRSTVFCINCQS. Arg262 (proton donor; for delta-elimination activity) is an active-site residue.

It belongs to the FPG family. Monomer. The cofactor is Zn(2+).

It carries out the reaction Hydrolysis of DNA containing ring-opened 7-methylguanine residues, releasing 2,6-diamino-4-hydroxy-5-(N-methyl)formamidopyrimidine.. The enzyme catalyses 2'-deoxyribonucleotide-(2'-deoxyribose 5'-phosphate)-2'-deoxyribonucleotide-DNA = a 3'-end 2'-deoxyribonucleotide-(2,3-dehydro-2,3-deoxyribose 5'-phosphate)-DNA + a 5'-end 5'-phospho-2'-deoxyribonucleoside-DNA + H(+). Involved in base excision repair of DNA damaged by oxidation or by mutagenic agents. Acts as a DNA glycosylase that recognizes and removes damaged bases. Has a preference for oxidized purines, such as 7,8-dihydro-8-oxoguanine (8-oxoG). Has AP (apurinic/apyrimidinic) lyase activity and introduces nicks in the DNA strand. Cleaves the DNA backbone by beta-delta elimination to generate a single-strand break at the site of the removed base with both 3'- and 5'-phosphates. This chain is Formamidopyrimidine-DNA glycosylase, found in Marinomonas sp. (strain MWYL1).